Here is an 83-residue protein sequence, read N- to C-terminus: UPF0270 protein CGSHiEE_07180 (83 aa).

Belongs to the UPF0270 family.

This Haemophilus influenzae (strain PittEE) protein is UPF0270 protein CGSHiEE_07180.